Here is a 473-residue protein sequence, read N- to C-terminus: BTB/POZ domain-containing protein KCTD8 (473 aa).

The disordered stretch occupies residues methionine 1–proline 36. A compositionally biased stretch (low complexity) spans serine 21–glycine 35. Residues glutamate 44 to glutamate 122 form the BTB domain. Serine 78 carries the phosphoserine modification. At arginine 80 the chain carries Omega-N-methylarginine. The tract at residues isoleucine 326–asparagine 409 is disordered. The span at lysine 330–serine 346 shows a compositional bias: basic and acidic residues. A compositionally biased stretch (polar residues) spans glutamate 347–threonine 388. Residue serine 410 is modified to Phosphoserine.

Interacts as a tetramer with GABRB1 and GABRB2.

The protein localises to the presynaptic cell membrane. It is found in the postsynaptic cell membrane. Functionally, auxiliary subunit of GABA-B receptors that determine the pharmacology and kinetics of the receptor response. Increases agonist potency and markedly alter the G-protein signaling of the receptors by accelerating onset and promoting desensitization. This Homo sapiens (Human) protein is BTB/POZ domain-containing protein KCTD8 (KCTD8).